We begin with the raw amino-acid sequence, 340 residues long: GTP 3',8-cyclase (340 aa).

The Radical SAM core domain occupies 8-230 (KLGRPIRDLR…EQHFEIDPVE (223 aa)). Arg17 contributes to the GTP binding site. [4Fe-4S] cluster is bound by residues Cys24 and Cys28. An S-adenosyl-L-methionine-binding site is contributed by Tyr30. Residue Cys31 participates in [4Fe-4S] cluster binding. Arg71 contributes to the GTP binding site. Position 75 (Gly75) interacts with S-adenosyl-L-methionine. A GTP-binding site is contributed by Thr102. Residue Ser126 participates in S-adenosyl-L-methionine binding. Position 163 (Lys163) interacts with GTP. Met197 contacts S-adenosyl-L-methionine. [4Fe-4S] cluster-binding residues include Cys261 and Cys264. 266–268 (RAR) contributes to the GTP binding site. Cys278 provides a ligand contact to [4Fe-4S] cluster.

Belongs to the radical SAM superfamily. MoaA family. In terms of assembly, monomer and homodimer. [4Fe-4S] cluster is required as a cofactor.

The enzyme catalyses GTP + AH2 + S-adenosyl-L-methionine = (8S)-3',8-cyclo-7,8-dihydroguanosine 5'-triphosphate + 5'-deoxyadenosine + L-methionine + A + H(+). It participates in cofactor biosynthesis; molybdopterin biosynthesis. Functionally, catalyzes the cyclization of GTP to (8S)-3',8-cyclo-7,8-dihydroguanosine 5'-triphosphate. This chain is GTP 3',8-cyclase, found in Staphylococcus aureus (strain bovine RF122 / ET3-1).